Consider the following 223-residue polypeptide: Ribose-5-phosphate isomerase A (223 aa).

Residues 29 to 32, 82 to 85, and 95 to 98 contribute to the substrate site; these read TGST, DGAD, and KGGG. The active-site Proton acceptor is the E104. K122 lines the substrate pocket.

It belongs to the ribose 5-phosphate isomerase family. Homodimer.

The enzyme catalyses aldehydo-D-ribose 5-phosphate = D-ribulose 5-phosphate. It participates in carbohydrate degradation; pentose phosphate pathway; D-ribose 5-phosphate from D-ribulose 5-phosphate (non-oxidative stage): step 1/1. In terms of biological role, catalyzes the reversible conversion of ribose-5-phosphate to ribulose 5-phosphate. The chain is Ribose-5-phosphate isomerase A from Neisseria meningitidis serogroup C / serotype 2a (strain ATCC 700532 / DSM 15464 / FAM18).